Here is a 43-residue protein sequence, read N- to C-terminus: uncharacterized protein (43 aa).

An N-terminal signal peptide occupies residues 1 to 17; sequence MYRRLLLNLFCMVFLQA.

This is an uncharacterized protein from Helicobacter pylori (strain J99 / ATCC 700824) (Campylobacter pylori J99).